We begin with the raw amino-acid sequence, 239 residues long: LexA repressor (239 aa).

Residues 26 to 46 constitute a DNA-binding region (H-T-H motif); it reads FDEMKDALDLASKSGIHRLIT. Catalysis depends on for autocatalytic cleavage activity residues serine 159 and lysine 197.

Belongs to the peptidase S24 family. As to quaternary structure, homodimer.

The enzyme catalyses Hydrolysis of Ala-|-Gly bond in repressor LexA.. In terms of biological role, represses a number of genes involved in the response to DNA damage (SOS response), including recA and lexA. In the presence of single-stranded DNA, RecA interacts with LexA causing an autocatalytic cleavage which disrupts the DNA-binding part of LexA, leading to derepression of the SOS regulon and eventually DNA repair. The protein is LexA repressor of Rhizobium etli (strain ATCC 51251 / DSM 11541 / JCM 21823 / NBRC 15573 / CFN 42).